Consider the following 494-residue polypeptide: GTPase Der (494 aa).

2 consecutive EngA-type G domains span residues 3 to 166 (PVVA…VGEK) and 208 to 381 (IKLA…ECAT). GTP-binding positions include 9–16 (GRPNVGKS), 56–60 (DTGGI), 118–121 (NKTD), 214–221 (GRPNVGKS), 261–265 (DTAGV), and 326–329 (NKWD). Positions 382–466 (RRVNTSMLTK…PIRIQFKEGE (85 aa)) constitute a KH-like domain.

The protein belongs to the TRAFAC class TrmE-Era-EngA-EngB-Septin-like GTPase superfamily. EngA (Der) GTPase family. In terms of assembly, associates with the 50S ribosomal subunit.

Its function is as follows. GTPase that plays an essential role in the late steps of ribosome biogenesis. The sequence is that of GTPase Der from Serratia proteamaculans (strain 568).